Here is a 1159-residue protein sequence, read N- to C-terminus: ATP-dependent helicase/deoxyribonuclease subunit B (1159 aa).

It belongs to the helicase family. AddB/RexB type 2 subfamily. As to quaternary structure, heterodimer of AddA and RexB. Requires Mg(2+) as cofactor.

In terms of biological role, the heterodimer acts as both an ATP-dependent DNA helicase and an ATP-dependent, dual-direction single-stranded exonuclease. Recognizes the chi site generating a DNA molecule suitable for the initiation of homologous recombination. This subunit has 5' -&gt; 3' nuclease activity but not helicase activity. This chain is ATP-dependent helicase/deoxyribonuclease subunit B, found in Leuconostoc mesenteroides subsp. mesenteroides (strain ATCC 8293 / DSM 20343 / BCRC 11652 / CCM 1803 / JCM 6124 / NCDO 523 / NBRC 100496 / NCIMB 8023 / NCTC 12954 / NRRL B-1118 / 37Y).